Here is a 693-residue protein sequence, read N- to C-terminus: Polyribonucleotide nucleotidyltransferase (693 aa).

Mg(2+) is bound by residues Asp-489 and Asp-495. The region spanning 556–615 (PQIHVMNINPAKIKDVVGRGGATVKGIVEKTGAQIDTSDSGEVKVFAKDKKSMDMAVAMI) is the KH domain. One can recognise an S1 motif domain in the interval 625 to 693 (GQVYKGKIVK…GRVKLSLVAR (69 aa)).

Belongs to the polyribonucleotide nucleotidyltransferase family. Component of the RNA degradosome, which is a multiprotein complex involved in RNA processing and mRNA degradation. Requires Mg(2+) as cofactor.

Its subcellular location is the cytoplasm. The enzyme catalyses RNA(n+1) + phosphate = RNA(n) + a ribonucleoside 5'-diphosphate. Involved in mRNA degradation. Catalyzes the phosphorolysis of single-stranded polyribonucleotides processively in the 3'- to 5'-direction. The polypeptide is Polyribonucleotide nucleotidyltransferase (Francisella tularensis subsp. tularensis (strain WY96-3418)).